Consider the following 372-residue polypeptide: Protein RecA (372 aa).

ATP is bound at residue 81-88; the sequence is GPESSGKT.

This sequence belongs to the RecA family.

The protein resides in the cytoplasm. Its function is as follows. Can catalyze the hydrolysis of ATP in the presence of single-stranded DNA, the ATP-dependent uptake of single-stranded DNA by duplex DNA, and the ATP-dependent hybridization of homologous single-stranded DNAs. It interacts with LexA causing its activation and leading to its autocatalytic cleavage. This Haemophilus ducreyi (strain 35000HP / ATCC 700724) protein is Protein RecA.